The primary structure comprises 1374 residues: MSLERELRQLSKAKTKAQRSGQLREEASVCHQLGELLASHGCYAEALREHQQELQLLETTDDPLGCAVAHRKIGERLAEMEDYSAALQHQHRYLELACALSNHVEQQRAWATIGRTHLDIYDHHQSQDALQQAQDAFEKSLAILDEKLQGSLPKRELSEMRTRIYLNLGLTCESLQQVALCSAYFKKSIFLAEQNHLYEDLFRARYNLGAIHWRRGQHSQAMRCLEGARECARVLKQAFLESECCLLLSQVLLDLGDFLAAKRALKKAYRLGSQKPLQKASVCRTLKYVLAVVQLQQRLEESEESDPEVAMGICEQLGDLFSKAGDFPKAAAAYQKQLRFAELLSRPGPELAVIHVSLAATLGDMKDHRQAVHHYEAELKLQEGNPLEEAKTWLNIALSREEAGDAYEVLALCFQKALGCAQLAGQPQLQRQILQHLHAVQLRLQPQEAPSTETRLQELKAAGDEDEGDGEDEEDEEDDDALEATELELSESENEADASPPLEEDEELRGCLGRQRVNKWSRRNDVGETLLHRACIEGQLGRVQDLVRQGHPLNPRDYCGWTPLHEACNYGHLDIVRFLLDHGAAVDDPGGQGCDGITPLHDALNCGHFEVAELLIERGASVTLRTRKGHNPLETLQQWVKLYGKDLDSETQEKAAAMGRLLQAASLGRAPHSSQAPQTLPSNHLFDPETSPPSSPCPGTPEVCEASTRVSQGLAVSTVARPRRSRHKVASSSSSEGEDSAGPSQPTQKRPRHASPSLQTKAPMPGPASDREAATTSTSWAAYREAIRGVGSAQTCRLGPSPLRGPSEIPIPQAALIPQEECLAGDWLEEDFPMSPGHRGRCPARPQSSGDGGRHRASGPGSDTARRPRAQARQSRLPYLESWSTPVRADRANSQATEPARSPDVPRVVAPTGENPTTGHLPGQVLPPPIRVRVRVQDNLFLIPVPHREAHSVAWLAEQAAQRHYQASGLLPRLSLQKEGALLAPQDPIPDVLQSNEEVLAEVTSWDLPPLRDRYRRACQTLEQGEHQQVLQAVEHQGSAPTFSACSLALRQAQLTPLLRALKLHSALRELRLAGNRLGDGCVAELLATLDTVPGLTLLDLSSNHLGPEGLRQLAAGLLGQTTLQNLEELDLSMNPLGDGCGQALASILRACPVLCTLHLQACGFGPGFFLSHQVALGSAFQDTKCLKTLSLSYNGLGPTALGPVLGSLPAHSLLRLELSSVVTGKSDVGLTDPVVHYLSQEGCVLEHLSLSANHLGDKDVRALSRCLPLCPSLVSLDLSANPEVSSAGLEELLSTLQKRPQGLSFLGLSGCAVQGPLGLDLWDKVVAQLQELQLCTRRLSAEDRNALHQLLPSQLGPKVCTLDQGPKLFFRHL.

8 TPR repeats span residues alanine 27–threonine 60, alanine 67–leucine 100, glutamine 107–serine 140, threonine 162–asparagine 195, phenylalanine 202–leucine 235, serine 242–lysine 275, methionine 311–leucine 344, and alanine 352–asparagine 385. Residues lysine 460–leucine 508 are disordered. A compositionally biased stretch (acidic residues) spans aspartate 464–glutamate 507. 3 ANK repeats span residues valine 526–tyrosine 558, cysteine 559–glycine 591, and aspartate 595–arginine 627. Positions glycine 668 to serine 777 are disordered. Positions histidine 672–serine 682 are enriched in polar residues. Over residues threonine 690–glycine 699 the composition is skewed to pro residues. At serine 711 the chain carries Phosphoserine. Low complexity predominate over residues serine 731–serine 744. Arginine 788 carries the post-translational modification Omega-N-methylarginine. The interval glutamate 829–valine 908 is disordered. 7 LRR repeats span residues histidine 1065–threonine 1089, valine 1093–glutamine 1121, leucine 1124–serine 1147, threonine 1184–glycine 1207, glycine 1243–arginine 1266, cysteine 1271–threonine 1296, and valine 1327–glutamine 1350.

The protein belongs to the Tonsoku family. In terms of assembly, component of the MMS22L-TONSL complex, a complex at least composed of MMS22L and TONSL/NFKBIL2. Interacts with the MCM complex, the FACT complex and the RPA complex. Interacts with MCM5; the interaction is direct. Binds histones, with a strong preference for histone H3.1 (histones H3.1 and H3-4/H3.1t). Interacts (via ANK repeats) with histone H4; specifically binds histone H4 lacking methylation at 'Lys-20' (H4K20me0). May interact with DNAJC9; the interaction seems to be histone-dependent.

Its subcellular location is the nucleus. It localises to the chromosome. It is found in the cytoplasm. Functionally, component of the MMS22L-TONSL complex, a complex that promotes homologous recombination-mediated repair of double-strand breaks (DSBs) at stalled or collapsed replication forks. The MMS22L-TONSL complex is required to maintain genome integrity during DNA replication. It mediates the assembly of RAD51 filaments on single-stranded DNA (ssDNA): the MMS22L-TONSL complex is recruited to DSBs following histone replacement by histone chaperones and eviction of the replication protein A complex (RPA/RP-A) from DSBs. Following recruitment to DSBs, the TONSL-MMS22L complex promotes recruitment of RAD51 filaments and subsequent homologous recombination. Within the complex, TONSL acts as a histone reader, which recognizes and binds newly synthesized histones following their replacement by histone chaperones. Specifically binds histone H4 lacking methylation at 'Lys-20' (H4K20me0) and histone H3.1. The sequence is that of Tonsoku-like protein (TONSL) from Bos taurus (Bovine).